We begin with the raw amino-acid sequence, 63 residues long: Protein DsrB (63 aa).

This sequence belongs to the DsrB family.

In Yersinia pseudotuberculosis serotype O:1b (strain IP 31758), this protein is Protein DsrB.